The primary structure comprises 181 residues: Shikimate kinase 2 (181 aa).

Gly12 to Thr17 lines the ATP pocket. Thr16 and Asp32 together coordinate Mg(2+). Substrate is bound by residues Asp34, Arg58, and Gly79. The segment at Glu112–Lys126 is LID domain. Arg120 serves as a coordination point for ATP. Arg139 is a binding site for substrate.

The protein belongs to the shikimate kinase family. AroL subfamily. Monomer. Mg(2+) is required as a cofactor.

The protein localises to the cytoplasm. The catalysed reaction is shikimate + ATP = 3-phosphoshikimate + ADP + H(+). It participates in metabolic intermediate biosynthesis; chorismate biosynthesis; chorismate from D-erythrose 4-phosphate and phosphoenolpyruvate: step 5/7. In terms of biological role, catalyzes the specific phosphorylation of the 3-hydroxyl group of shikimic acid using ATP as a cosubstrate. This Escherichia fergusonii (strain ATCC 35469 / DSM 13698 / CCUG 18766 / IAM 14443 / JCM 21226 / LMG 7866 / NBRC 102419 / NCTC 12128 / CDC 0568-73) protein is Shikimate kinase 2.